Consider the following 360-residue polypeptide: Glutamate 5-kinase (360 aa).

Lysine 7 lines the ATP pocket. Substrate-binding residues include serine 47, aspartate 134, and asparagine 146. ATP contacts are provided by residues 166–167 and 210–216; these read TD and TGGITTK. The PUA domain maps to 275–348; sequence VGQITLDEGA…LNKKENINSS (74 aa).

Belongs to the glutamate 5-kinase family.

The protein resides in the cytoplasm. The catalysed reaction is L-glutamate + ATP = L-glutamyl 5-phosphate + ADP. It functions in the pathway amino-acid biosynthesis; L-proline biosynthesis; L-glutamate 5-semialdehyde from L-glutamate: step 1/2. Functionally, catalyzes the transfer of a phosphate group to glutamate to form L-glutamate 5-phosphate. The polypeptide is Glutamate 5-kinase (Prochlorococcus marinus subsp. pastoris (strain CCMP1986 / NIES-2087 / MED4)).